We begin with the raw amino-acid sequence, 535 residues long: CTP synthase (535 aa).

Residues 1–267 (MTKFIFVTGG…DDIVIKKLGL (267 aa)) form an amidoligase domain region. Ser13 serves as a coordination point for CTP. UTP is bound at residue Ser13. 14–19 (SLGKGI) serves as a coordination point for ATP. Tyr54 is a binding site for L-glutamine. Residue Asp71 coordinates ATP. Mg(2+) is bound by residues Asp71 and Glu141. CTP contacts are provided by residues 148 to 150 (DIE), 188 to 193 (KTKPTQ), and Lys224. Residues 188–193 (KTKPTQ) and Lys224 contribute to the UTP site. The Glutamine amidotransferase type-1 domain maps to 292-534 (TIGIVGKYVS…IGASLKTNKL (243 aa)). Gly354 lines the L-glutamine pocket. Cys381 functions as the Nucleophile; for glutamine hydrolysis in the catalytic mechanism. L-glutamine-binding positions include 382-385 (LGMQ), Glu405, and Arg462. Residues His507 and Glu509 contribute to the active site.

The protein belongs to the CTP synthase family. As to quaternary structure, homotetramer.

It catalyses the reaction UTP + L-glutamine + ATP + H2O = CTP + L-glutamate + ADP + phosphate + 2 H(+). The enzyme catalyses L-glutamine + H2O = L-glutamate + NH4(+). It carries out the reaction UTP + NH4(+) + ATP = CTP + ADP + phosphate + 2 H(+). It functions in the pathway pyrimidine metabolism; CTP biosynthesis via de novo pathway; CTP from UDP: step 2/2. Allosterically activated by GTP, when glutamine is the substrate; GTP has no effect on the reaction when ammonia is the substrate. The allosteric effector GTP functions by stabilizing the protein conformation that binds the tetrahedral intermediate(s) formed during glutamine hydrolysis. Inhibited by the product CTP, via allosteric rather than competitive inhibition. Catalyzes the ATP-dependent amination of UTP to CTP with either L-glutamine or ammonia as the source of nitrogen. Regulates intracellular CTP levels through interactions with the four ribonucleotide triphosphates. The sequence is that of CTP synthase from Carboxydothermus hydrogenoformans (strain ATCC BAA-161 / DSM 6008 / Z-2901).